Reading from the N-terminus, the 460-residue chain is Tubby-related protein 3 (460 aa).

Disordered regions lie at residues 37 to 132 (KKQR…ETAP) and 151 to 193 (YDEE…GVTA). Over residues 151–162 (YDEEPDKEEDEG) the composition is skewed to acidic residues. Over residues 166 to 188 (SSPSARSEESAAASQKAASETGA) the composition is skewed to low complexity.

Belongs to the TUB family. In terms of assembly, associates with the IFT complex A (IFT-A). Interacts with SIRT1. In terms of tissue distribution, widely expressed including eyes and adipose depots.

The protein localises to the nucleus. Its subcellular location is the cell membrane. It is found in the cell projection. The protein resides in the cilium. It localises to the cytoplasm. The protein localises to the secreted. In terms of biological role, negative regulator of the Shh signaling transduction pathway: recruited to primary cilia via association with the IFT complex A (IFT-A) and is required for recruitment of G protein-coupled receptor GPR161 to cilia, a promoter of PKA-dependent basal repression machinery in Shh signaling. Binds to phosphorylated inositide (phosphoinositide) lipids. Both IFT-A- and phosphoinositide-binding properties are required to regulate ciliary G protein-coupled receptor trafficking. During adipogenesis, regulates ciliary trafficking of FFAR4 in preadipocytes. This is Tubby-related protein 3 from Mus musculus (Mouse).